The primary structure comprises 235 residues: Phosphoribosylaminoimidazole-succinocarboxamide synthase (235 aa).

The protein belongs to the SAICAR synthetase family.

It catalyses the reaction 5-amino-1-(5-phospho-D-ribosyl)imidazole-4-carboxylate + L-aspartate + ATP = (2S)-2-[5-amino-1-(5-phospho-beta-D-ribosyl)imidazole-4-carboxamido]succinate + ADP + phosphate + 2 H(+). It participates in purine metabolism; IMP biosynthesis via de novo pathway; 5-amino-1-(5-phospho-D-ribosyl)imidazole-4-carboxamide from 5-amino-1-(5-phospho-D-ribosyl)imidazole-4-carboxylate: step 1/2. In Chlorobium chlorochromatii (strain CaD3), this protein is Phosphoribosylaminoimidazole-succinocarboxamide synthase.